The following is a 363-amino-acid chain: 3-dehydroquinate synthase (363 aa).

NAD(+)-binding positions include 107–111 (GVIGD), 131–132 (TT), Lys144, and Lys153. Glu186, His251, and His268 together coordinate Zn(2+).

The protein belongs to the sugar phosphate cyclases superfamily. Dehydroquinate synthase family. Co(2+) serves as cofactor. The cofactor is Zn(2+). It depends on NAD(+) as a cofactor.

Its subcellular location is the cytoplasm. The catalysed reaction is 7-phospho-2-dehydro-3-deoxy-D-arabino-heptonate = 3-dehydroquinate + phosphate. It participates in metabolic intermediate biosynthesis; chorismate biosynthesis; chorismate from D-erythrose 4-phosphate and phosphoenolpyruvate: step 2/7. Catalyzes the conversion of 3-deoxy-D-arabino-heptulosonate 7-phosphate (DAHP) to dehydroquinate (DHQ). The chain is 3-dehydroquinate synthase from Nostoc punctiforme (strain ATCC 29133 / PCC 73102).